Reading from the N-terminus, the 422-residue chain is Glucuronoxylanase XynC (422 aa).

The signal sequence occupies residues 1 to 32 (MIPRIKKTICVLLVCFTMLSVMLGPGATEVLA). Residue Glu-171 is the Proton donor of the active site. Glu-260 functions as the Nucleophile in the catalytic mechanism.

The protein belongs to the glycosyl hydrolase 30 family.

The protein resides in the secreted. The enzyme catalyses Endohydrolysis of (1-&gt;4)-beta-D-xylosyl links in some glucuronoarabinoxylans.. It functions in the pathway glycan degradation; xylan degradation. Functionally, catalyzes the depolymerization of methylglucuronoxylan (MeGAXn) from different sources. It cleaves the beta-1,4-xylosidic bond penultimate to that linking carbon one of the xylose residue substituted with alpha-1,2-linked 4-O-methyl-D-glucuronate (MeGA). The chain is Glucuronoxylanase XynC (xynC) from Bacillus subtilis (strain 168).